Here is a 180-residue protein sequence, read N- to C-terminus: FMN reductase (NADH) RutF (180 aa).

Belongs to the non-flavoprotein flavin reductase family. RutF subfamily.

The enzyme catalyses FMNH2 + NAD(+) = FMN + NADH + 2 H(+). Catalyzes the reduction of FMN to FMNH2 which is used to reduce pyrimidine by RutA via the Rut pathway. This Variovorax paradoxus (strain S110) protein is FMN reductase (NADH) RutF.